Consider the following 463-residue polypeptide: MNTNQIILTNQNDNSVNVWSNVTQDLYNYYGEALYNSWFSKVNFIESSLNTVILCAPTNFIRDWIKSKYSVVILQLFQHYNNAIKTVEIITKELPASNQATLELPTKTFADIGSSELNSENIFSTFDIRFTFDNFVVGAPNELAYAVARAVAESSSAVSESNPLFLYGGVGLGKTHLMHAIGWYIKQNNPSRKVIYMSAEKFMYQFVKALRNKEVMSFKEKFRSVDVLMIDDIQFICGKDSTQEEFFHTFNTLIDNNRQMVISCDRSPSDLDDIEDRIKSRLGWGLVADVHSTTYELRLGILESKIEQMNVKVPKDVIDFLASKIVSNVRELEGALNKVIAHSNFTAKEITLENTQNILRDLLRSNERIITVEDIQKKVANRYNIKLSDMSSPRRMRTIARPRQIAMYLSKILTPKSLVDIGKKFGKKDHTTVMHAIKKVEELLESDLELREEINLMMKILQN.

The tract at residues 1–84 is domain I, interacts with DnaA modulators; sequence MNTNQIILTN…QLFQHYNNAI (84 aa). Residues 84-124 form a domain II region; it reads IKTVEIITKELPASNQATLELPTKTFADIGSSELNSENIFS. The tract at residues 125-343 is domain III, AAA+ region; the sequence is TFDIRFTFDN…GALNKVIAHS (219 aa). ATP contacts are provided by Gly-171, Gly-173, Lys-174, and Thr-175. A domain IV, binds dsDNA region spans residues 344–463; it reads NFTAKEITLE…INLMMKILQN (120 aa).

This sequence belongs to the DnaA family. In terms of assembly, oligomerizes as a right-handed, spiral filament on DNA at oriC.

The protein resides in the cytoplasm. In terms of biological role, plays an essential role in the initiation and regulation of chromosomal replication. ATP-DnaA binds to the origin of replication (oriC) to initiate formation of the DNA replication initiation complex once per cell cycle. Binds the DnaA box (a 9 base pair repeat at the origin) and separates the double-stranded (ds)DNA. Forms a right-handed helical filament on oriC DNA; dsDNA binds to the exterior of the filament while single-stranded (ss)DNA is stabiized in the filament's interior. The ATP-DnaA-oriC complex binds and stabilizes one strand of the AT-rich DNA unwinding element (DUE), permitting loading of DNA polymerase. After initiation quickly degrades to an ADP-DnaA complex that is not apt for DNA replication. Binds acidic phospholipids. The protein is Chromosomal replication initiator protein DnaA of Rickettsia bellii (strain RML369-C).